The following is a 366-amino-acid chain: Chorismate synthase (366 aa).

NADP(+) contacts are provided by R48 and R54. FMN-binding positions include 125-127 (RSS), 238-239 (NA), G278, 293-297 (KPTSS), and R319.

It belongs to the chorismate synthase family. As to quaternary structure, homotetramer. FMNH2 serves as cofactor.

It catalyses the reaction 5-O-(1-carboxyvinyl)-3-phosphoshikimate = chorismate + phosphate. The protein operates within metabolic intermediate biosynthesis; chorismate biosynthesis; chorismate from D-erythrose 4-phosphate and phosphoenolpyruvate: step 7/7. In terms of biological role, catalyzes the anti-1,4-elimination of the C-3 phosphate and the C-6 proR hydrogen from 5-enolpyruvylshikimate-3-phosphate (EPSP) to yield chorismate, which is the branch point compound that serves as the starting substrate for the three terminal pathways of aromatic amino acid biosynthesis. This reaction introduces a second double bond into the aromatic ring system. This chain is Chorismate synthase, found in Burkholderia orbicola (strain MC0-3).